The primary structure comprises 891 residues: DNA mismatch repair protein MutS (891 aa).

643–650 (GPNMGGKS) provides a ligand contact to ATP.

Belongs to the DNA mismatch repair MutS family.

Functionally, this protein is involved in the repair of mismatches in DNA. It is possible that it carries out the mismatch recognition step. This protein has a weak ATPase activity. The protein is DNA mismatch repair protein MutS of Xanthomonas campestris pv. campestris (strain ATCC 33913 / DSM 3586 / NCPPB 528 / LMG 568 / P 25).